We begin with the raw amino-acid sequence, 118 residues long: Large ribosomal subunit protein uL18 (118 aa).

This sequence belongs to the universal ribosomal protein uL18 family. In terms of assembly, part of the 50S ribosomal subunit; part of the 5S rRNA/L5/L18/L25 subcomplex. Contacts the 5S and 23S rRNAs.

In terms of biological role, this is one of the proteins that bind and probably mediate the attachment of the 5S RNA into the large ribosomal subunit, where it forms part of the central protuberance. This chain is Large ribosomal subunit protein uL18, found in Myxococcus xanthus (strain DK1622).